Reading from the N-terminus, the 254-residue chain is MSLDFTVVIPARLRSTRLPGKPLLPIAGKPMVQHVWEQARRSGASRVVIATDDASIVEACRAFGAEVLLTRADHESGTDRLAEVAAQLGLAPDAIVVNVQGDEPLIPPVIIDQVAANLADHPEAGIATLAEPIHEPETIFNPNAVKVVSDKHGLALTFSRAPLPWARDAFAKDRSQLPVGVPYRRHIGMYAYRVGFLQDFVAWGPCWLEQTESLEQLRALWHGVRIHVADAIEAPAVGVDTPEDLERVRRLLEA.

Belongs to the KdsB family.

The protein resides in the cytoplasm. It catalyses the reaction 3-deoxy-alpha-D-manno-oct-2-ulosonate + CTP = CMP-3-deoxy-beta-D-manno-octulosonate + diphosphate. Its pathway is nucleotide-sugar biosynthesis; CMP-3-deoxy-D-manno-octulosonate biosynthesis; CMP-3-deoxy-D-manno-octulosonate from 3-deoxy-D-manno-octulosonate and CTP: step 1/1. It functions in the pathway bacterial outer membrane biogenesis; lipopolysaccharide biosynthesis. Functionally, activates KDO (a required 8-carbon sugar) for incorporation into bacterial lipopolysaccharide in Gram-negative bacteria. This chain is 3-deoxy-manno-octulosonate cytidylyltransferase, found in Pseudomonas entomophila (strain L48).